Here is a 187-residue protein sequence, read N- to C-terminus: Benzene 1,2-dioxygenase subunit beta (187 aa).

This sequence belongs to the bacterial ring-hydroxylating dioxygenase beta subunit family. This dioxygenase system consists of four proteins: the two subunits of the hydroxylase component (BedC1 and BedC2), a ferredoxin (BedB) and a ferredoxin reductase (BedA).

It carries out the reaction benzene + NADH + O2 + H(+) = cis-1,2-dihydrobenzene-1,2-diol + NAD(+). It functions in the pathway aromatic compound metabolism; benzene degradation; catechol from benzene: step 1/2. The beta subunit may be responsible for the substrate specificity of the enzyme. The polypeptide is Benzene 1,2-dioxygenase subunit beta (bedC2) (Pseudomonas putida (Arthrobacter siderocapsulatus)).